The chain runs to 581 residues: Leucine-rich repeat transmembrane neuronal protein 3 (581 aa).

Residues 1–30 (MGFNVIRLLSGSAVALVIAPTVLLTMLSSA) form the signal peptide. Positions 31–61 (ERGCPKGCRCEGKMVYCESQKLQEIPSSISA) constitute an LRRNT domain. At 31 to 419 (ERGCPKGCRC…ADAEHISFHK (389 aa)) the chain is on the extracellular side. LRR repeat units lie at residues 63–83 (CLGL…QFKG), 86–107 (QLTW…AFNG), 110–131 (RLKE…TFRP), 134–155 (NLRN…QFRG), 158–179 (KLLS…IFQD), 182–203 (NLEL…VFAG), 206–226 (RLKE…ALFP), 230–251 (SLQN…MSWT), 254–275 (SLQR…SVFQ), and 279–300 (NLQR…ILDS). N-linked (GlcNAc...) asparagine glycosylation is present at Asn126. The LRRCT domain maps to 312 to 363 (NIWECSRNICSLVNWLKSFKGLRENTIICASPKELQGVNVIDAVKNYSICGK). Asn357 carries N-linked (GlcNAc...) asparagine glycosylation. The tract at residues 377–408 (KPTFKPKLPRPKHESKPPLPPTVGATEPGPET) is disordered. Residues 420–440 (IIAGSVALFLSVLVILLVIYV) form a helical membrane-spanning segment. Over 441 to 581 (SWKRYPASMK…RISDHKQQLA (141 aa)) the chain is Cytoplasmic.

It belongs to the LRRTM family. Expressed in neuronal tissues.

It localises to the cell membrane. It is found in the postsynaptic cell membrane. Exhibits a limited synaptogenic activity in vitro, restricted to excitatory presynaptic differentiation. May play a role in the development and maintenance of the vertebrate nervous system. The polypeptide is Leucine-rich repeat transmembrane neuronal protein 3 (LRRTM3) (Homo sapiens (Human)).